The primary structure comprises 940 residues: Chordin (940 aa).

An N-terminal signal peptide occupies residues 1–19; sequence MMEGLLWILLSVIIASVHG. Residues 42 to 118 enclose the VWFC 1 domain; the sequence is SGCSFGGRFY…LPGHCCKTCP (77 aa). 4 CHRD domains span residues 162–277, 279–398, 404–519, and 525–652; these read TTTD…KHRA, FAET…GRRS, SVLS…LLPY, and RRNE…VPNH. N-linked (GlcNAc...) asparagine glycans are attached at residues Asn347 and Asn430. VWFC domains are found at residues 689–748, 767–836, and 855–919; these read HSCF…PICE, EGCY…KECP, and RLCK…PECI.

This sequence belongs to the chordin family. Interacts with twsg1 and/or bmp4. In terms of processing, cleaved by tolloid proteases; cleavage participates in dorsoventral patterning during early development.

It localises to the secreted. In terms of biological role, dorsalizing factor. Key developmental protein that dorsalizes early vertebrate embryonic tissues by binding to ventralizing TGF-beta family bone morphogenetic proteins (BMPs) and sequestering them in latent complexes. The protein is Chordin (chd) of Danio rerio (Zebrafish).